The primary structure comprises 235 residues: Leucyl/phenylalanyl-tRNA--protein transferase (235 aa).

The protein belongs to the L/F-transferase family.

Its subcellular location is the cytoplasm. The enzyme catalyses N-terminal L-lysyl-[protein] + L-leucyl-tRNA(Leu) = N-terminal L-leucyl-L-lysyl-[protein] + tRNA(Leu) + H(+). It catalyses the reaction N-terminal L-arginyl-[protein] + L-leucyl-tRNA(Leu) = N-terminal L-leucyl-L-arginyl-[protein] + tRNA(Leu) + H(+). The catalysed reaction is L-phenylalanyl-tRNA(Phe) + an N-terminal L-alpha-aminoacyl-[protein] = an N-terminal L-phenylalanyl-L-alpha-aminoacyl-[protein] + tRNA(Phe). In terms of biological role, functions in the N-end rule pathway of protein degradation where it conjugates Leu, Phe and, less efficiently, Met from aminoacyl-tRNAs to the N-termini of proteins containing an N-terminal arginine or lysine. The sequence is that of Leucyl/phenylalanyl-tRNA--protein transferase from Anaeromyxobacter sp. (strain Fw109-5).